The following is a 259-amino-acid chain: Deoxyribose-phosphate aldolase (259 aa).

D102 acts as the Proton donor/acceptor in catalysis. K167 (schiff-base intermediate with acetaldehyde) is an active-site residue. Residue K201 is the Proton donor/acceptor of the active site.

Belongs to the DeoC/FbaB aldolase family. DeoC type 2 subfamily.

The protein resides in the cytoplasm. It catalyses the reaction 2-deoxy-D-ribose 5-phosphate = D-glyceraldehyde 3-phosphate + acetaldehyde. The protein operates within carbohydrate degradation; 2-deoxy-D-ribose 1-phosphate degradation; D-glyceraldehyde 3-phosphate and acetaldehyde from 2-deoxy-alpha-D-ribose 1-phosphate: step 2/2. Functionally, catalyzes a reversible aldol reaction between acetaldehyde and D-glyceraldehyde 3-phosphate to generate 2-deoxy-D-ribose 5-phosphate. This Erwinia tasmaniensis (strain DSM 17950 / CFBP 7177 / CIP 109463 / NCPPB 4357 / Et1/99) protein is Deoxyribose-phosphate aldolase.